The primary structure comprises 466 residues: Ras-GEF domain-containing family member 1C (466 aa).

A disordered region spans residues 1 to 37; that stretch reads MPQTLSASDMVTPGSLSPPPTEPTDGEQAGQPLLDGA. Residues 34-164 form the N-terminal Ras-GEF domain; sequence LDGAPSSASL…LLQALHQKLA (131 aa). Residues 200–446 enclose the Ras-GEF domain; that stretch reads DPYTLAQQLT…YLASYESESP (247 aa).

Guanine nucleotide exchange factor (GEF). The protein is Ras-GEF domain-containing family member 1C (RASGEF1C) of Homo sapiens (Human).